The sequence spans 169 residues: Styrene-oxide isomerase (169 aa).

The next 4 membrane-spanning stretches (helical) occupy residues 13 to 33, 61 to 81, 85 to 105, and 129 to 149; these read GILMIFCTLLFGVGLWMHLVG, PALNGMMVIAVAFVLPSLGFA, PHLLGNIIILDGWANVGFYFF, and FLALAPAYLFGVLAMGALAVI.

The protein localises to the membrane. It catalyses the reaction styrene oxide = 2-phenylacetaldehyde. The protein operates within aromatic compound metabolism. Its function is as follows. Epoxystyrene isomerase that catalyzes the second step in the aerobic styrene degradation pathway by converting epoxystyrene to phenylacetaldehyde. This is Styrene-oxide isomerase (styC) from Pseudomonas fluorescens.